The chain runs to 464 residues: MKEGIDMRESVAEEPKHKFFQSTEGENKSLDEVNGSVKVPKNAGFWRTLFAYTGPGILIAVGYMDPGNWITSIAGGAQFKYSLLSVILISSLIAMLLQSMAARLGIVTGKDLAQLTRERTSKTMGIILWLITESAIMATDVAEIIGSGIAIKLLFNIPLVVGILITTADVLILLLLMKLGFRKIEAIVATLVAVILLVFTYEVFLAGPQLDQMFAGYMPTKDIVTNKSMLYLALGIVGATVMPHDLYLGSSISQTRAVDRHDRQDVAKAIKFTTIDSNLQLTIAFIVNSLLLILGAALFFGTNSTVGRFVDLFNSLNNSHIVGAIASPMLSMLFAVALLSSGQSSTITGTLSGQIIMEGFIHLRMPLWAQRLLTRLLSVTPVLIFAIYYHGNEAKIENLLTLSQVFLSVALPFAIVPLVKFTSSKELMGEFVNKAWVKYSAWVATVVLVSLNIYLILQTVGVIG.

11 helical membrane-spanning segments follow: residues 57–77 (ILIA…AGGA), 82–102 (SLLS…SMAA), 125–145 (GIIL…AEII), 157–177 (IPLV…LLLM), 186–206 (AIVA…VFLA), 229–249 (MLYL…LYLG), 281–301 (LTIA…LFFG), 321–341 (IVGA…LLSS), 376–396 (LLSV…EAKI), 399–419 (LLTL…VPLV), and 443–463 (VATV…VGVI).

Belongs to the NRAMP family.

It localises to the cell membrane. Functionally, h(+)-stimulated, divalent metal cation uptake system. The chain is Divalent metal cation transporter MntH from Levilactobacillus brevis (Lactobacillus brevis).